A 143-amino-acid chain; its full sequence is Putative protein FPV235 (143 aa).

This chain is Putative protein FPV235, found in Vertebrata (FPV).